A 159-amino-acid chain; its full sequence is GDP-mannose mannosyl hydrolase (159 aa).

Residues 2-3 (FL), phenylalanine 8, and arginine 36 contribute to the substrate site. Positions 13 to 153 (RSTPLVSLDF…SRAYFLAEKR (141 aa)) constitute a Nudix hydrolase domain. Residues glycine 49, glutamate 69, and glutamine 122 each contribute to the Mg(2+) site. The short motif at 50–71 (GRVQKDETLEAAFERLTMAELG) is the Nudix box element.

This sequence belongs to the Nudix hydrolase family. In terms of assembly, homodimer. Mg(2+) is required as a cofactor.

The catalysed reaction is GDP-alpha-D-mannose + H2O = D-mannose + GDP + H(+). In terms of biological role, hydrolyzes GDP-mannose. This is GDP-mannose mannosyl hydrolase from Escherichia coli O157:H7.